Consider the following 765-residue polypeptide: Protein O-mannosyl-transferase 2 (765 aa).

The disordered stretch occupies residues 1 to 31 (MAASVVKTPKCPRRGSVKDVAQNAPRTAPTS). Residues 35 to 55 (ANWNWWLLLATVFLVTFATRF) traverse the membrane as a helical segment. N-linked (GlcNAc...) asparagine glycans are attached at residues N80, N106, and N119. Transmembrane regions (helical) follow at residues 128–148 (YFCT…VYDL), 175–195 (ILLD…MVKV), 206–226 (GLRW…TISV), 228–248 (FVGL…LWLI), and 268–288 (ITLI…HLSV). 2 N-linked (GlcNAc...) asparagine glycosylation sites follow: N290 and N314. 3 MIR domains span residues 318–374 (PRDV…IRPH), 384–440 (VQIL…VLIV), and 445–501 (NETV…VEDN). A glycan (N-linked (GlcNAc...) asparagine) is linked at N445. 4 helical membrane-spanning segments follow: residues 566–586 (IYLL…ALFV), 667–687 (LFLG…VLYF), 689–709 (HYFP…NYIL), and 719–739 (VILG…SPLA). N-linked (GlcNAc...) asparagine glycosylation is present at N751.

The protein belongs to the glycosyltransferase 39 family. In terms of assembly, interacts with Rt/POMT1. In terms of tissue distribution, at the cellular blastoderm stage, expression accumulates in the ventrally located mesoderm primordium. At germ band extension, mesoderm expression is seen as stripes of strong expression. A very strong signal is also detected in the invaginating gut. As the germ band retracts, mesodermal expression decays and becomes restricted to somatic muscle precursors.

It is found in the endoplasmic reticulum membrane. It carries out the reaction a di-trans,poly-cis-dolichyl beta-D-mannosyl phosphate + L-seryl-[protein] = 3-O-(alpha-D-mannosyl)-L-seryl-[protein] + a di-trans,poly-cis-dolichyl phosphate + H(+). The catalysed reaction is a di-trans,poly-cis-dolichyl beta-D-mannosyl phosphate + L-threonyl-[protein] = 3-O-(alpha-D-mannosyl)-L-threonyl-[protein] + a di-trans,poly-cis-dolichyl phosphate + H(+). It participates in protein modification; protein glycosylation. Rt/POMT1 and tw/POMT2 function as a protein O-mannosyltransferase in association with each other to generate and maintain normal muscle development. The polypeptide is Protein O-mannosyl-transferase 2 (tw) (Drosophila melanogaster (Fruit fly)).